The following is a 465-amino-acid chain: 3-isopropylmalate dehydratase large subunit (465 aa).

[4Fe-4S] cluster is bound by residues Cys-347, Cys-407, and Cys-410.

Belongs to the aconitase/IPM isomerase family. LeuC type 1 subfamily. Heterodimer of LeuC and LeuD. Requires [4Fe-4S] cluster as cofactor.

It catalyses the reaction (2R,3S)-3-isopropylmalate = (2S)-2-isopropylmalate. It functions in the pathway amino-acid biosynthesis; L-leucine biosynthesis; L-leucine from 3-methyl-2-oxobutanoate: step 2/4. Its function is as follows. Catalyzes the isomerization between 2-isopropylmalate and 3-isopropylmalate, via the formation of 2-isopropylmaleate. The chain is 3-isopropylmalate dehydratase large subunit from Aeromonas salmonicida (strain A449).